The sequence spans 103 residues: Pyrimidine/purine nucleoside phosphorylase (103 aa).

The protein belongs to the nucleoside phosphorylase PpnP family.

The enzyme catalyses a purine D-ribonucleoside + phosphate = a purine nucleobase + alpha-D-ribose 1-phosphate. It carries out the reaction adenosine + phosphate = alpha-D-ribose 1-phosphate + adenine. The catalysed reaction is cytidine + phosphate = cytosine + alpha-D-ribose 1-phosphate. It catalyses the reaction guanosine + phosphate = alpha-D-ribose 1-phosphate + guanine. The enzyme catalyses inosine + phosphate = alpha-D-ribose 1-phosphate + hypoxanthine. It carries out the reaction thymidine + phosphate = 2-deoxy-alpha-D-ribose 1-phosphate + thymine. The catalysed reaction is uridine + phosphate = alpha-D-ribose 1-phosphate + uracil. It catalyses the reaction xanthosine + phosphate = alpha-D-ribose 1-phosphate + xanthine. Catalyzes the phosphorolysis of diverse nucleosides, yielding D-ribose 1-phosphate and the respective free bases. Can use uridine, adenosine, guanosine, cytidine, thymidine, inosine and xanthosine as substrates. Also catalyzes the reverse reactions. The protein is Pyrimidine/purine nucleoside phosphorylase of Shewanella putrefaciens (strain CN-32 / ATCC BAA-453).